A 501-amino-acid chain; its full sequence is Aldehyde dehydrogenase 1A1 (501 aa).

An N-acetylserine modification is found at Ser2. Lys91 and Lys128 each carry N6-acetyllysine. NAD(+) contacts are provided by residues 167 to 170 (IPWN), 193 to 196 (KPAE), 226 to 227 (GP), and 246 to 247 (GS). N6-acetyllysine is present on Lys252. The active-site Proton acceptor is Glu269. 269-271 (ELG) lines the NAD(+) pocket. Cys303 serves as the catalytic Nucleophile. Positions 336-501 (LTPGINQGPQ…VAMKISQKNS (166 aa)) are mediates interaction with PRMT3. At Thr337 the chain carries Phosphothreonine. 349–353 (EQHDK) contributes to the NAD(+) binding site. 2 positions are modified to N6-acetyllysine: Lys353 and Lys367. 400 to 402 (EIF) is a binding site for NAD(+). Lys410 carries the N6-acetyllysine modification. Residue Ser413 is modified to Phosphoserine. N6-acetyllysine occurs at positions 419, 435, and 495.

This sequence belongs to the aldehyde dehydrogenase family. In terms of assembly, homotetramer. Interacts with PRMT3; the interaction is direct, inhibits ALDH1A1 aldehyde dehydrogenase activity and is independent of the methyltransferase activity of PRMT3. Post-translationally, the N-terminus is blocked most probably by acetylation. As to expression, expressed in retina. Expressed in lens and cornea (at protein level). Expressed by midbrain dopamine neurons.

The protein resides in the cytoplasm. The protein localises to the cytosol. Its subcellular location is the cell projection. It localises to the axon. It carries out the reaction an aldehyde + NAD(+) + H2O = a carboxylate + NADH + 2 H(+). It catalyses the reaction all-trans-retinal + NAD(+) + H2O = all-trans-retinoate + NADH + 2 H(+). The enzyme catalyses 9-cis-retinal + NAD(+) + H2O = 9-cis-retinoate + NADH + 2 H(+). The catalysed reaction is 11-cis-retinal + NAD(+) + H2O = 11-cis-retinoate + NADH + 2 H(+). It carries out the reaction 13-cis-retinal + NAD(+) + H2O = 13-cis-retinoate + NADH + 2 H(+). It catalyses the reaction 4-aminobutanal + NAD(+) + H2O = 4-aminobutanoate + NADH + 2 H(+). The enzyme catalyses 3-deoxyglucosone + NAD(+) + H2O = 2-dehydro-3-deoxy-D-gluconate + NADH + 2 H(+). The catalysed reaction is (E)-4-hydroxynon-2-enal + NAD(+) + H2O = (E)-4-hydroxynon-2-enoate + NADH + 2 H(+). It carries out the reaction malonaldehyde + NAD(+) + H2O = 3-oxopropanoate + NADH + 2 H(+). It catalyses the reaction hexanal + NAD(+) + H2O = hexanoate + NADH + 2 H(+). The enzyme catalyses propanal + NAD(+) + H2O = propanoate + NADH + 2 H(+). The catalysed reaction is acetaldehyde + NAD(+) + H2O = acetate + NADH + 2 H(+). It carries out the reaction benzaldehyde + NAD(+) + H2O = benzoate + NADH + 2 H(+). The protein operates within cofactor metabolism; retinol metabolism. With respect to regulation, the aminobutyraldehyde dehydrogenase activity is negatively regulated by ethanol in vivo. Functionally, cytosolic dehydrogenase that catalyzes the irreversible oxidation of a wide range of aldehydes to their corresponding carboxylic acid. Functions downstream of retinol dehydrogenases and catalyzes the oxidation of retinaldehyde into retinoic acid, the second step in the oxidation of retinol/vitamin A into retinoic acid. This pathway is crucial to control the levels of retinol and retinoic acid, two important molecules which excess can be teratogenic and cytotoxic. Also oxidizes aldehydes resulting from lipid peroxidation like (E)-4-hydroxynon-2-enal/HNE, malonaldehyde and hexanal that form protein adducts and are highly cytotoxic. By participating for instance to the clearance of (E)-4-hydroxynon-2-enal/HNE in the lens epithelium prevents the formation of HNE-protein adducts and lens opacification. Also functions downstream of fructosamine-3-kinase in the fructosamine degradation pathway by catalyzing the oxidation of 3-deoxyglucosone, the carbohydrate product of fructosamine 3-phosphate decomposition, which is itself a potent glycating agent that may react with lysine and arginine side-chains of proteins. Also has an aminobutyraldehyde dehydrogenase activity and is probably part of an alternative pathway for the biosynthesis of GABA/4-aminobutanoate in midbrain, thereby playing a role in GABAergic synaptic transmission. The protein is Aldehyde dehydrogenase 1A1 of Mus musculus (Mouse).